Reading from the N-terminus, the 493-residue chain is High affinity nitrate transporter 2.7 (493 aa).

Residues 1–19 (MEPSQRNTKPPSFSDSTIP) show a composition bias toward polar residues. A disordered region spans residues 1–20 (MEPSQRNTKPPSFSDSTIPV). 12 consecutive transmembrane segments (helical) span residues 46–66 (WLSL…VPVI), 70–90 (LNLS…GSIF), 113–133 (FLTA…SFIL), 136–156 (FFVG…SSMF), 174–194 (VGAG…AEFL), 202–222 (VSFV…LLYG), 257–277 (FVEI…ALLY), 299–319 (FGVN…SNIA), 341–361 (LWGL…LGRV), 368–388 (ILVM…VFGV), 400–420 (VAGI…FLLF), and 431–451 (ISLM…IYFP).

Belongs to the major facilitator superfamily. Nitrate/nitrite porter (TC 2.A.1.8) family. As to expression, expressed in seeds, leaves and shoots. Lower expression in roots.

The protein resides in the vacuole membrane. In terms of biological role, involved in high-affinity nitrate transport. Controls nitrate content in seeds. The sequence is that of High affinity nitrate transporter 2.7 (NRT2.7) from Arabidopsis thaliana (Mouse-ear cress).